Reading from the N-terminus, the 314-residue chain is tRNA-cytidine(32) 2-sulfurtransferase (314 aa).

The PP-loop motif motif lies at 39 to 44 (SGGKDS). Residues Cys-114, Cys-117, and Cys-205 each coordinate [4Fe-4S] cluster.

This sequence belongs to the TtcA family. As to quaternary structure, homodimer. It depends on Mg(2+) as a cofactor. [4Fe-4S] cluster serves as cofactor.

The protein localises to the cytoplasm. It catalyses the reaction cytidine(32) in tRNA + S-sulfanyl-L-cysteinyl-[cysteine desulfurase] + AH2 + ATP = 2-thiocytidine(32) in tRNA + L-cysteinyl-[cysteine desulfurase] + A + AMP + diphosphate + H(+). It participates in tRNA modification. Its function is as follows. Catalyzes the ATP-dependent 2-thiolation of cytidine in position 32 of tRNA, to form 2-thiocytidine (s(2)C32). The sulfur atoms are provided by the cysteine/cysteine desulfurase (IscS) system. The sequence is that of tRNA-cytidine(32) 2-sulfurtransferase from Cupriavidus metallidurans (strain ATCC 43123 / DSM 2839 / NBRC 102507 / CH34) (Ralstonia metallidurans).